Reading from the N-terminus, the 524-residue chain is Putative ribose/galactose/methyl galactoside import ATP-binding protein 1 (524 aa).

ABC transporter domains are found at residues leucine 29–threonine 270 and valine 280–histidine 524. Glycine 61–serine 68 contacts ATP.

It belongs to the ABC transporter superfamily. Carbohydrate importer 2 (CUT2) (TC 3.A.1.2) family.

The protein resides in the cell inner membrane. It catalyses the reaction D-ribose(out) + ATP + H2O = D-ribose(in) + ADP + phosphate + H(+). The catalysed reaction is D-galactose(out) + ATP + H2O = D-galactose(in) + ADP + phosphate + H(+). Part of an ABC transporter complex involved in carbohydrate import. Could be involved in ribose, galactose and/or methyl galactoside import. Responsible for energy coupling to the transport system. In Rhizobium etli (strain ATCC 51251 / DSM 11541 / JCM 21823 / NBRC 15573 / CFN 42), this protein is Putative ribose/galactose/methyl galactoside import ATP-binding protein 1.